A 740-amino-acid chain; its full sequence is Catalase-peroxidase (740 aa).

Positions 1–32 (MPEDRPIEDSPPIGEAQTDAPAGGCPAGFGRI) are disordered. The tryptophyl-tyrosyl-methioninium (Trp-Tyr) (with M-263) cross-link spans 113-237 (WHAAGTYRVS…LAAVQMGLIY (125 aa)). Residue H114 is the Proton acceptor of the active site. Residues 237–263 (YVNPEGPNGNPDPQASAIDIRETFGRM) constitute a cross-link (tryptophyl-tyrosyl-methioninium (Tyr-Met) (with W-113)). H278 contacts heme b.

It belongs to the peroxidase family. Peroxidase/catalase subfamily. In terms of assembly, homodimer or homotetramer. Requires heme b as cofactor. Formation of the three residue Trp-Tyr-Met cross-link is important for the catalase, but not the peroxidase activity of the enzyme.

It catalyses the reaction H2O2 + AH2 = A + 2 H2O. It carries out the reaction 2 H2O2 = O2 + 2 H2O. Its function is as follows. Bifunctional enzyme with both catalase and broad-spectrum peroxidase activity. May play a role in the intracellular survival of mycobacteria. The protein is Catalase-peroxidase of Mycolicibacterium smegmatis (Mycobacterium smegmatis).